The following is a 121-amino-acid chain: Trypsin/alpha-amylase inhibitor CMX2 (121 aa).

The N-terminal stretch at 1–24 (MAFKHQLILSTAILLAVLAAASAS) is a signal peptide.

The protein belongs to the protease inhibitor I6 (cereal trypsin/alpha-amylase inhibitor) family.

It localises to the secreted. The protein is Trypsin/alpha-amylase inhibitor CMX2 of Triticum aestivum (Wheat).